A 220-amino-acid chain; its full sequence is Protein-L-isoaspartate O-methyltransferase (220 aa).

S69 is an active-site residue.

Belongs to the methyltransferase superfamily. L-isoaspartyl/D-aspartyl protein methyltransferase family.

The protein resides in the cytoplasm. The enzyme catalyses [protein]-L-isoaspartate + S-adenosyl-L-methionine = [protein]-L-isoaspartate alpha-methyl ester + S-adenosyl-L-homocysteine. In terms of biological role, catalyzes the methyl esterification of L-isoaspartyl residues in peptides and proteins that result from spontaneous decomposition of normal L-aspartyl and L-asparaginyl residues. It plays a role in the repair and/or degradation of damaged proteins. The sequence is that of Protein-L-isoaspartate O-methyltransferase from Alcanivorax borkumensis (strain ATCC 700651 / DSM 11573 / NCIMB 13689 / SK2).